Consider the following 852-residue polypeptide: Cell surface glycoprotein (852 aa).

An N-terminal signal peptide occupies residues 1–34; that stretch reads MTDTTGKLRAVLLTALMVGSVIGAGVAFTGGAAA. N-linked (GalNAc...) (glycosaminoglycan) asparagine glycosylation is present at N36. Residues 84-131 are disordered; sequence KLDNEKEVSPATLSRTGGSDEGVPLQMPIPEDQSTGSYDSNGPDNDEA. Positions 115-126 are enriched in polar residues; it reads DQSTGSYDSNGP. N339, N398, N438, N513, N643, N727, N751, and N787 each carry an N-linked (Glc...) asparagine glycan. Residues 772–828 form a disordered region; it reads ELEEPDQTTVDQPENNQTMTTTMTETTTETTTEMTTTQENTTENGSEGTSDGESGGS. The span at 785–823 shows a compositional bias: low complexity; that stretch reads ENNQTMTTTMTETTTETTTEMTTTQENTTENGSEGTSDG. 14 O-linked (Gal...) threonine glycosylation sites follow: T789, T791, T792, T793, T795, T797, T798, T799, T801, T802, T803, T806, T807, and T808. The N-linked (Glc...) asparagine glycan is linked to N811. 2 O-linked (Gal...) threonine glycosylation sites follow: T812 and T813. N815 is a glycosylation site (N-linked (Glc...) asparagine). A helical membrane pass occupies residues 829-849; sequence IPGFGVGVALVAVLGAALLAL. A PGF sorting signal motif is present at residues 830 to 832; sequence PGF.

The protein belongs to the halobacterial S-layer protein family. Post-translationally, N-linked glycan at Asn-36 consists of a glycosaminoglycan chain, constructed by a repeating sulfated pentasaccharide block composed of GlcNAc, GalNAc, Gal, GalA, 3-O-methyl-GalA, and sulfate in the molar ratio of 1:1:1:1:1:2; the other N-linked glycans contain Glc, GlcA and IdoA. In terms of processing, O-linked glycans consist of Glc-Gal disaccharides. The C-terminus (residues 770-778) is lipidated with diphytanylglyceryl phosphate. Post-translationally, cleaved by the archaeosortase ArtA at the C-terminus, with removal of a short hydrophobic segment.

The protein localises to the secreted. It localises to the cell wall. Its subcellular location is the S-layer. It is found in the cell membrane. Functionally, S-layer protein. The S-layer is a paracrystalline mono-layered assembly of proteins which coat the surface of the cell. The polypeptide is Cell surface glycoprotein (csg) (Halobacterium salinarum (strain ATCC 29341 / DSM 671 / R1)).